Reading from the N-terminus, the 671-residue chain is DNA ligase (671 aa).

NAD(+) contacts are provided by residues 37–41 (DIEYD), 86–87 (SL), and glutamate 117. The active-site N6-AMP-lysine intermediate is the lysine 119. Residues arginine 140, glutamate 177, lysine 295, and lysine 319 each contribute to the NAD(+) site. Residues cysteine 413, cysteine 416, cysteine 431, and cysteine 437 each contribute to the Zn(2+) site. The region spanning 594–671 (IISAAVFGKT…DEEEMLNLLK (78 aa)) is the BRCT domain.

Belongs to the NAD-dependent DNA ligase family. LigA subfamily. Mg(2+) is required as a cofactor. The cofactor is Mn(2+).

The enzyme catalyses NAD(+) + (deoxyribonucleotide)n-3'-hydroxyl + 5'-phospho-(deoxyribonucleotide)m = (deoxyribonucleotide)n+m + AMP + beta-nicotinamide D-nucleotide.. Functionally, DNA ligase that catalyzes the formation of phosphodiester linkages between 5'-phosphoryl and 3'-hydroxyl groups in double-stranded DNA using NAD as a coenzyme and as the energy source for the reaction. It is essential for DNA replication and repair of damaged DNA. This chain is DNA ligase, found in Polynucleobacter asymbioticus (strain DSM 18221 / CIP 109841 / QLW-P1DMWA-1) (Polynucleobacter necessarius subsp. asymbioticus).